The chain runs to 66 residues: Large ribosomal subunit protein bL35 (66 aa).

This sequence belongs to the bacterial ribosomal protein bL35 family. As to quaternary structure, part of the 50S ribosomal subunit. Contacts proteins L15 and L33.

Functionally, binds the 23S rRNA. The sequence is that of Large ribosomal subunit protein bL35 (rpmI) from Deinococcus radiodurans (strain ATCC 13939 / DSM 20539 / JCM 16871 / CCUG 27074 / LMG 4051 / NBRC 15346 / NCIMB 9279 / VKM B-1422 / R1).